Here is a 368-residue protein sequence, read N- to C-terminus: Phosphate acyltransferase (368 aa).

Positions 335-368 (VSLGDGEHDAGGAGHTGPAAGQHAEPPAAQSSKA) are disordered.

It belongs to the PlsX family. As to quaternary structure, homodimer. Probably interacts with PlsY.

It is found in the cytoplasm. It catalyses the reaction a fatty acyl-[ACP] + phosphate = an acyl phosphate + holo-[ACP]. The protein operates within lipid metabolism; phospholipid metabolism. Catalyzes the reversible formation of acyl-phosphate (acyl-PO(4)) from acyl-[acyl-carrier-protein] (acyl-ACP). This enzyme utilizes acyl-ACP as fatty acyl donor, but not acyl-CoA. In Burkholderia vietnamiensis (strain G4 / LMG 22486) (Burkholderia cepacia (strain R1808)), this protein is Phosphate acyltransferase.